The sequence spans 314 residues: DNA-directed RNA polymerase subunit alpha (314 aa).

Residues 1 to 228 (MIEFEKPNIH…DHLSIFVNLT (228 aa)) are alpha N-terminal domain (alpha-NTD). Residues 245–314 (KEKMLEMTIE…DLGLSLRKED (70 aa)) form an alpha C-terminal domain (alpha-CTD) region.

This sequence belongs to the RNA polymerase alpha chain family. As to quaternary structure, homodimer. The RNAP catalytic core consists of 2 alpha, 1 beta, 1 beta' and 1 omega subunit. When a sigma factor is associated with the core the holoenzyme is formed, which can initiate transcription.

It carries out the reaction RNA(n) + a ribonucleoside 5'-triphosphate = RNA(n+1) + diphosphate. DNA-dependent RNA polymerase catalyzes the transcription of DNA into RNA using the four ribonucleoside triphosphates as substrates. In Lactiplantibacillus plantarum (strain ATCC BAA-793 / NCIMB 8826 / WCFS1) (Lactobacillus plantarum), this protein is DNA-directed RNA polymerase subunit alpha.